The chain runs to 484 residues: MLSLAKAKLAVVGIGRQCVAVRTLNGARAVHRSFSSSEHDQDSSTSENELFDIIISGGGMVGTAMACSLGLDPNLTGKKILLLEAGHEKKMDKIPETYSTRVSSISPGSATLLSGLGAWDHIVNMRCKPYNKMQVWDACSDALITFDKENLQDEMAYIVENDVIVAALTKQLQTLSDHVKVQYRTKVVKYTWPHPYHVSESIPWVQVALANGKTLHTKLLIGADGPNSMVRREAGIPTVKWNYDQSAVVAVLHLSEPTENNVAWQRFLPTGPIAMLPLSDTESSLVWSTSHQHAEELLQMDEESFVDAINSAFWSNENHSELVETAGSLFRMALSVLMPDSGSARQLPPSVSGIGPKSRVMFPLGMGHATEYIRHRVALIGDAAHRVHPLAGQGANLGFGDVSYLTQVLSQAAYNGKDIGAMQHLLEFETERQRHNLPMMTAIDLMKRLYSSNTAPMVLLRTFGLQATNAVPPLKEQIMAFASK.

A mitochondrion-targeting transit peptide spans 1 to 41 (MLSLAKAKLAVVGIGRQCVAVRTLNGARAVHRSFSSSEHDQ).

It belongs to the UbiH/COQ6 family. In terms of assembly, component of a multi-subunit COQ enzyme complex, composed of at least coq3, coq4, coq5, coq6, coq7 and coq9. Interacts with coq8b and coq7. It depends on FAD as a cofactor.

It is found in the mitochondrion inner membrane. The protein localises to the golgi apparatus. The protein resides in the cell projection. It carries out the reaction a 4-hydroxy-3-(all-trans-polyprenyl)benzoate + 2 reduced [2Fe-2S]-[ferredoxin] + O2 + 2 H(+) = a 3,4-dihydroxy-5-(all-trans-polyprenyl)benzoate + 2 oxidized [2Fe-2S]-[ferredoxin] + H2O. The catalysed reaction is a 2-methoxy-6-(all-trans-polyprenyl)phenol + 2 reduced [2Fe-2S]-[ferredoxin] + O2 + 2 H(+) = a 2-methoxy-6-(all-trans-polyprenyl)benzene-1,4-diol + 2 oxidized [2Fe-2S]-[ferredoxin] + H2O. It participates in cofactor biosynthesis; ubiquinone biosynthesis. Its function is as follows. FAD-dependent monooxygenase required for two non-consecutive steps during ubiquinone biosynthesis. Required for the C5-ring hydroxylation during ubiquinone biosynthesis by catalyzing the hydroxylation of 4-hydroxy-3-(all-trans-polyprenyl)benzoic acid to 3,4-dihydroxy-5-(all-trans-polyprenyl)benzoic acid. Also acts downstream of coq4, for the C1-hydroxylation during ubiquinone biosynthesis by catalyzing the hydroxylation of 2-methoxy-6-(all-trans-polyprenyl)phenol to 2-methoxy-6-(all-trans-polyprenyl)benzene-1,4-diol. The electrons required for the hydroxylation reaction are funneled indirectly to coq6 from NADPH via a ferredoxin/ferredoxin reductase system. The sequence is that of Ubiquinone biosynthesis monooxygenase COQ6, mitochondrial from Danio rerio (Zebrafish).